The chain runs to 670 residues: Solute carrier organic anion transporter family member 1A5 (670 aa).

Over 1 to 20 (MGETEKRIATHGVRCFSKIK) the chain is Cytoplasmic. Residues 21–40 (MFLLALTCAYVSKSLSGIYM) form a helical membrane-spanning segment. Residues 41 to 59 (NSMLTQIERQFDIPTSIVG) lie on the Extracellular side of the membrane. Residues 60-80 (LINGSFEIGNLLLIILVSYFG) form a helical membrane-spanning segment. Residues 81–86 (TKLHRP) lie on the Cytoplasmic side of the membrane. Residues 87–111 (IMIGIGCVIMGLGCFLMSLPHFLMG) traverse the membrane as a helical segment. Residues 112–155 (RYEYETTISPTSNLSSNSFLCMENRTQTLKPTQDPAECVKEMKS) lie on the Extracellular side of the membrane. 2 N-linked (GlcNAc...) asparagine glycosylation sites follow: Asn124 and Asn135. A helical transmembrane segment spans residues 156-184 (LMWIYVLVGNIIRGIGETPIMPLGISYIE). The Cytoplasmic portion of the chain corresponds to 185 to 203 (DFAKSENSPLYIGILESGK). Residues 204–224 (MIGPIVGLLLGSFCARIYVDT) form a helical membrane-spanning segment. Residues 225 to 242 (GSVNTDDLTITPTDTRWV) are Extracellular-facing. Residues 243–267 (GAWWIGFLVCAGVNILTSIPFFFFP) form a helical membrane-spanning segment. At 268 to 311 (KTLPKEGLQDNVARTENDKEEKHREKAKEENRGITKDFLPFMKS) the chain is on the cytoplasmic side. A helical membrane pass occupies residues 312-333 (LSCNPIYMLLILTSVLQINAFI). Residues 334-353 (NMFTFLPKYLEQQYGKSTSE) lie on the Extracellular side of the membrane. Residues 354 to 377 (VVLLIGVCNLPPICIGYLLIGFIM) form a helical membrane-spanning segment. At 378-381 (KKFR) the chain is on the cytoplasmic side. Residues 382–405 (ITVKKAAYMAFCLSLFEYLLSYFH) form a helical membrane-spanning segment. The Extracellular segment spans residues 406 to 513 (FMISCDNFQV…PECANKLQYF (108 aa)). One can recognise a Kazal-like domain in the interval 433–488 (NKVLADCNTRCSCLTNTWDPVCGDNGLSYMSACLAGCEKSVGMGTHMVFQNCSCIQ). Intrachain disulfides connect Cys439–Cys469, Cys445–Cys465, and Cys454–Cys486. Residues Asn483 and Asn492 are each glycosylated (N-linked (GlcNAc...) asparagine). A helical transmembrane segment spans residues 514-536 (LIMSVIGSFIYSITAIPGYMVLL). Residues 537 to 545 (RCIKSEEKS) are Cytoplasmic-facing. Residues 546–571 (LGIGLHAFCTRIFAGIPAPIYFGALI) form a helical membrane-spanning segment. Over 572–605 (DRTCLHWGTLKCGEPGACRIYNINNFRRIYLVLP) the chain is Extracellular. The chain crosses the membrane as a helical span at residues 606–623 (AALRGSSYLPAFFILILM). Topologically, residues 624–670 (RKFQLPGEMYSSETELADMKQTVKKSECTDVHGIPKVENDGELKTKL) are cytoplasmic.

It belongs to the organo anion transporter (TC 2.A.60) family. In terms of tissue distribution, expressed in brain, choroid plexus and lung, but not in liver or kidney.

The protein localises to the cell membrane. Its subcellular location is the basal cell membrane. It carries out the reaction taurocholate(out) = taurocholate(in). The catalysed reaction is glycocholate(out) = glycocholate(in). It catalyses the reaction taurochenodeoxycholate(out) = taurochenodeoxycholate(in). The enzyme catalyses tauroursodeoxycholate(out) = tauroursodeoxycholate(in). It carries out the reaction 3,3',5'-triiodo-L-thyronine(out) = 3,3',5'-triiodo-L-thyronine(in). The catalysed reaction is L-thyroxine(out) = L-thyroxine(in). It catalyses the reaction taurodeoxycholate(out) = taurodeoxycholate(in). The enzyme catalyses glycodeoxycholate(out) = glycodeoxycholate(in). It carries out the reaction glycochenodeoxycholate(out) = glycochenodeoxycholate(in). The catalysed reaction is glycoursodeoxycholate(out) = glycoursodeoxycholate(in). It catalyses the reaction estrone 3-sulfate(out) = estrone 3-sulfate(in). The enzyme catalyses prostaglandin E2(out) = prostaglandin E2(in). It carries out the reaction substance P(out) = substance P(in). Functionally, na(+)-independent transporter that mediates the cellular uptake of a broad range of organic anions such as the endogenous bile salts cholate and deoxycholate, either in their unconjugated or conjugated forms (taurocholate and glycocholate), estrone 3-sulfate and prostaglandin E2, at the plasma membrane. Responsible for intestinal absorption of bile acids. Capable of thyroid hormone transport (both T3 or 3,3',5'-triiodo-L-thyronine, and T4 or L-tyroxine). Plays roles in blood-brain and -cerebrospinal fluid barrier transport of organic anions and signal mediators, and in hormone uptake by neural cells. May also play a role in the reuptake of neuropeptides such as substance P/TAC1 and vasoactive intestinal peptide/VIP released from retinal neurons. Shows a pH-sensitive substrate specificity which may be ascribed to the protonation state of the binding site and leads to a stimulation of substrate transport in an acidic microenvironment. Hydrogencarbonate/HCO3(-) acts as the probable counteranion that exchanges for organic anions. May contribute to regulate the transport of organic compounds in testis across the blood-testis-barrier. This Mus musculus (Mouse) protein is Solute carrier organic anion transporter family member 1A5 (Slco1a5).